We begin with the raw amino-acid sequence, 444 residues long: Aflatoxin biosynthesis regulatory protein (444 aa).

The interval 1–26 (MVDHISPRASPGPIRSSQTRRARKLR) is disordered. The zn(2)-C6 fungal-type DNA-binding region spans 29-56 (CTSCASSKVRCTKEKPACARCIERGLAC). Positions 64-167 (MGRNPRAPSP…QGLGGDLAGQ (104 aa)) are disordered. A compositionally biased stretch (basic residues) spans 106–116 (TQAHTHAHSHP). Low complexity predominate over residues 120-130 (PQSHPQSNQPP). The segment covering 136 to 149 (PNGSSSVSAIFSHQ) has biased composition (polar residues).

In terms of assembly, interacts with its co-regulator aflS.

The protein resides in the nucleus. The protein localises to the endosome. Its function is as follows. Transcription factor involved in regulation of the aflatoxin biosynthesis gene cluster. Binds with its co-regulator aflS to AFLR1 elements (5'-TCGSWNNSCGR-3') present in the promoters of the aflatoxin cluster genes. The ratio of the expression data between aflS:aflR plays a crucial role in the regulation of aflatoxins production. A high ratio, produced at a range between 17 and 30 degrees Celsius, corresponds with the production profile of aflatoxin G1 biosynthesis. A low ratio, produced over 30 degrees Celsius, is related to aflatoxin B1 biosynthesis. In Aspergillus parasiticus (strain ATCC 56775 / NRRL 5862 / SRRC 143 / SU-1), this protein is Aflatoxin biosynthesis regulatory protein.